Here is a 140-residue protein sequence, read N- to C-terminus: Pro-variola growth factor (140 aa).

The signal sequence occupies residues M1–F18. At A19–Y100 the chain is on the extracellular side. A glycan (N-linked (GlcNAc...) asparagine; by host) is linked at N34. The EGF-like domain occupies A41–Q81. 3 disulfides stabilise this stretch: C45-C58, C53-C69, and C71-C80. The N-linked (GlcNAc...) asparagine; by host glycan is linked to N95. The chain crosses the membrane as a helical span at residues I101–F121. Residues V122–P140 lie on the Cytoplasmic side of the membrane.

Belongs to the orthopoxvirus OPG019 family. In terms of assembly, variola growth factor interacts with host EGFR and promotes EGFR dimerization.

Its subcellular location is the host membrane. It is found in the secreted. In terms of biological role, stimulates cellular proliferation (hyperplasia)and mobility around infected cells to promote rapid and efficient spread of infection. This effect is beneficial for virus replication in vivo, because poxviruses replicate possibly better in proliferating cells than in quiescent cells. Acts by binding host EGFR, inducing its dimerization, autophosphorylation and leading to activation of several cellular pathways regulating cell proliferation or cell survival. The activation by host EGFR of mitogen activated protein kinases (MAPK) and extracellular-signal regulated kinases (ERK) are essential for the positive effect of vaccinia growth factor on poxvirus virulence in vivo. The polypeptide is Pro-variola growth factor (OPG019) (Variola virus).